Here is a 260-residue protein sequence, read N- to C-terminus: Acetylglutamate kinase (260 aa).

Substrate is bound by residues 46 to 47 (GG), Arg-68, and Asn-160.

This sequence belongs to the acetylglutamate kinase family. ArgB subfamily.

The protein localises to the cytoplasm. The catalysed reaction is N-acetyl-L-glutamate + ATP = N-acetyl-L-glutamyl 5-phosphate + ADP. Its pathway is amino-acid biosynthesis; L-arginine biosynthesis; N(2)-acetyl-L-ornithine from L-glutamate: step 2/4. Functionally, catalyzes the ATP-dependent phosphorylation of N-acetyl-L-glutamate. The protein is Acetylglutamate kinase of Shewanella denitrificans (strain OS217 / ATCC BAA-1090 / DSM 15013).